A 904-amino-acid polypeptide reads, in one-letter code: Translation initiation factor IF-2 (904 aa).

3 disordered regions span residues 103 to 122 (YVKS…PDEE), 137 to 252 (NLEE…MVAG), and 267 to 315 (HLSA…FERP). The segment covering 137-177 (NLEEQQRLAESDRVRDEAIQRKREEEQAAKDRAEAERKAAE) has biased composition (basic and acidic residues). Low complexity-rich tracts occupy residues 178–230 (EAAA…AAPA) and 280–293 (RGKP…SSSR). The tr-type G domain maps to 403–572 (SRPPVVTIMG…SLQAEVLELK (170 aa)). Residues 412–419 (GHVDHGKT) form a G1 region. Position 412 to 419 (412 to 419 (GHVDHGKT)) interacts with GTP. The interval 437–441 (GITQH) is G2. A G3 region spans residues 458-461 (DTPG). GTP contacts are provided by residues 458–462 (DTPGH) and 512–515 (NKID). The segment at 512-515 (NKID) is G4. A G5 region spans residues 548-550 (SAK).

This sequence belongs to the TRAFAC class translation factor GTPase superfamily. Classic translation factor GTPase family. IF-2 subfamily.

It localises to the cytoplasm. Functionally, one of the essential components for the initiation of protein synthesis. Protects formylmethionyl-tRNA from spontaneous hydrolysis and promotes its binding to the 30S ribosomal subunits. Also involved in the hydrolysis of GTP during the formation of the 70S ribosomal complex. This Xanthomonas euvesicatoria pv. vesicatoria (strain 85-10) (Xanthomonas campestris pv. vesicatoria) protein is Translation initiation factor IF-2.